The sequence spans 274 residues: Penicillin-insensitive murein endopeptidase (274 aa).

A signal peptide spans 1 to 19; it reads MKKTAIALLAWFVSSASLA. Cystine bridges form between cysteine 44–cysteine 265, cysteine 187–cysteine 235, and cysteine 216–cysteine 223. Zn(2+)-binding residues include histidine 110, histidine 113, aspartate 120, aspartate 147, histidine 150, and histidine 211. The interval 225–274 is disordered; the sequence is DQPLPPPGDGCGAELQSWFEPPKPGTTKPEKKTPPPLPPSCQALLDEHVL.

This sequence belongs to the peptidase M74 family. Dimer. Zn(2+) is required as a cofactor.

It localises to the periplasm. Functionally, murein endopeptidase that cleaves the D-alanyl-meso-2,6-diamino-pimelyl amide bond that connects peptidoglycan strands. Likely plays a role in the removal of murein from the sacculus. The sequence is that of Penicillin-insensitive murein endopeptidase from Salmonella paratyphi A (strain AKU_12601).